Consider the following 485-residue polypeptide: Tektin-5 (485 aa).

4 coiled-coil regions span residues 113 to 185 (SRLT…EVNC), 225 to 251 (QQQMRKLAQRIDLQMRDNRDAQHALER), 342 to 385 (FNAR…MAKE), and 423 to 443 (DDTLQTLKLRLRETQDMLQLL).

It belongs to the tektin family. In terms of assembly, microtubule inner protein component of sperm flagellar doublet microtubules. Interacts with TEKT3. Ubiquitinated, leading to its degradation. Deubiquitinated by USP16, promoting its stability.

It localises to the cytoplasm. The protein localises to the cytoskeleton. It is found in the flagellum axoneme. Its function is as follows. Sperm-specific microtubule inner protein (MIP) part of the dynein-decorated doublet microtubules (DMTs) in flagellar axoneme. Forms an extensive interaction network in different conformations that reinforces the helix bundle composed by other tektin proteins (TEKT1 to TEKT4) and MIPs to anchor the tektin bundle onto the tubulin wall of A-tubule of the sperm flagellum. This is Tektin-5 (TEKT5) from Macaca fascicularis (Crab-eating macaque).